Here is a 319-residue protein sequence, read N- to C-terminus: Biotin synthase (319 aa).

The region spanning 44 to 273 (IHGDGIDLCS…EAKIRLAGGR (230 aa)) is the Radical SAM core domain. Residues C62, C66, and C69 each contribute to the [4Fe-4S] cluster site. [2Fe-2S] cluster contacts are provided by S106, C138, C198, and R268.

It belongs to the radical SAM superfamily. Biotin synthase family. As to quaternary structure, homodimer. Requires [4Fe-4S] cluster as cofactor. The cofactor is [2Fe-2S] cluster.

The catalysed reaction is (4R,5S)-dethiobiotin + (sulfur carrier)-SH + 2 reduced [2Fe-2S]-[ferredoxin] + 2 S-adenosyl-L-methionine = (sulfur carrier)-H + biotin + 2 5'-deoxyadenosine + 2 L-methionine + 2 oxidized [2Fe-2S]-[ferredoxin]. Its pathway is cofactor biosynthesis; biotin biosynthesis; biotin from 7,8-diaminononanoate: step 2/2. Catalyzes the conversion of dethiobiotin (DTB) to biotin by the insertion of a sulfur atom into dethiobiotin via a radical-based mechanism. The sequence is that of Biotin synthase from Clostridium perfringens (strain 13 / Type A).